A 245-amino-acid polypeptide reads, in one-letter code: tRNA pseudouridine synthase A 2 (245 aa).

Residue D53 is the Nucleophile of the active site. Residue Y111 participates in substrate binding.

This sequence belongs to the tRNA pseudouridine synthase TruA family. In terms of assembly, homodimer.

It catalyses the reaction uridine(38/39/40) in tRNA = pseudouridine(38/39/40) in tRNA. Formation of pseudouridine at positions 38, 39 and 40 in the anticodon stem and loop of transfer RNAs. In Bacillus thuringiensis subsp. konkukian (strain 97-27), this protein is tRNA pseudouridine synthase A 2.